The sequence spans 672 residues: MAEAPASPVPLSPLEVELDPEFEPQSRPRSCTWPLQRPELQASPAKPSGETAADSMIPEEDDDEDDEDGGGRASSAMVIGGGVSSTLGSGLLLEDSAMLLAPGGQDLGSGPASAAGALSGGTPTQLQPQQPLPQPQPGAAGGSGQPRKCSSRRNAWGNLSYADLITRAIESSPDKRLTLSQIYEWMVRCVPYFKDKGDSNSSAGWKNSIRHNLSLHSRFMRVQNEGTGKSSWWIINPDGGKSGKAPRRRAVSMDNSNKYTKSRGRAAKKKAALQAAPESADDSPSQLSKWPGSPTSRSSDELDAWTDFRSRTNSNASTVSGRLSPILASTELDDVQDDDGPLSPMLYSSSASLSPSVSKPCTVELPRLTDMAGTMNLNDGLAENLMDDLLDNIALPPSQPSPPGGLMQRGSSFPYTAKSSGLGSPTGSFNSTVFGPSSLNSLRQSPMQTIQENRPATFSSVSHYGNQTLQDLLASDSLSHSDVMMTQSDPLMSQASTAVSAQNARRNVMLRNDPMMSFAAQPTQGSLVNQNLLHHQHQTQGALGGSRALSNSVSNMGLSDSSSLGSAKHQQQSPASQSMQTLSDSLSGSSLYSASANLPVMGHDKFPSDLDLDMFNGSLECDMESIIRSELMDADGLDFNFDSLISTQNVVGLNVGNFTGAKQASSQSWVPG.

Disordered stretches follow at residues 1-85 (MAEA…GVSS) and 110-152 (GPAS…CSSR). S30 bears the Phosphoserine mark. Position 32 is a phosphothreonine (T32). Position 46 is an N6-methyllysine (K46). Over residues 57 to 68 (IPEEDDDEDDED) the composition is skewed to acidic residues. Positions 80–108 (GGGVSSTLGSGLLLEDSAMLLAPGGQDLG) are required for mitochondrial import. Residues 110–129 (GPASAAGALSGGTPTQLQPQ) are compositionally biased toward low complexity. K148 is modified (N6-methyllysine). The segment at residues 156 to 250 (WGNLSYADLI…KSGKAPRRRA (95 aa)) is a DNA-binding region (fork-head). T178 carries the phosphothreonine modification. Phosphoserine occurs at positions 208 and 214. K229 carries the N6-methyllysine modification. Positions 230-301 (SSWWIINPDG…GSPTSRSSDE (72 aa)) are disordered. At K241 the chain carries N6-acetyllysine. The Nuclear localization signal signature appears at 241–258 (KSGKAPRRRAVSMDNSNK). S252 is subject to Phosphoserine. Positions 260-271 (TKSRGRAAKKKA) are enriched in basic residues. 2 positions are modified to N6-methyllysine: K261 and K270. A phosphoserine mark is found at S279 and S283. A compositionally biased stretch (polar residues) spans 282-297 (DSPSQLSKWPGSPTSR). At K289 the chain carries N6-methyllysine. S293 is subject to Phosphoserine. Position 298 is a phosphoserine; by CaMK2A (S298). Positions 299–672 (SDELDAWTDF…QASSQSWVPG (374 aa)) are mediates interaction with CHUK/IKKA and IKBKB/IKKB. A Phosphoserine modification is found at S310. Residue S314 is modified to Phosphoserine; by SGK1. S398 and S412 each carry phosphoserine; by AMPK. 2 disordered regions span residues 399-441 (QPSP…SLNS) and 535-583 (HQHQ…QTLS). 2 stretches are compositionally biased toward polar residues: residues 409-441 (RGSS…SLNS) and 548-577 (ALSN…PASQ). The residue at position 418 (K418) is an N6-methyllysine. A Phosphoserine modification is found at S420. Residue S550 is modified to Phosphoserine; by MAPKAPK5. Position 554 is a phosphoserine; by AMPK and MAPKAPK5 (S554). Phosphoserine; by AMPK is present on residues S587 and S625. S643 bears the Phosphoserine; by IKKB mark.

In terms of assembly, upon metabolic stress, forms a complex composed of FOXO3, SIRT3 and mitochondrial RNA polymerase POLRMT; the complex is recruited to mtDNA in a SIRT3-dependent manner. Also forms a complex composed of FOXO3, SIRT3, TFAM and POLRMT. Interacts with SIRT2; the interaction occurs independently of SIRT2 deacetylase activity. Interacts with YWHAB/14-3-3-beta and YWHAZ/14-3-3-zeta, which are required for cytosolic sequestration. Upon oxidative stress, interacts with STK4/MST1, which disrupts interaction with YWHAB/14-3-3-beta and leads to nuclear translocation. Interacts with PIM1. Interacts with DDIT3/CHOP. Interacts (deacetylated form) with SKP2. Interacts with CHUK and IKBKB. Interacts with CAMK2A, CAMK2B and calcineurin A. Interacts with NUPR1; this interaction represses FOXO3 transactivation. Deacetylation by SIRT1 or SIRT2 stimulates interaction of FOXO3 with SKP2 and facilitates SCF(SKP2)-mediated FOXO3 ubiquitination and proteasomal degradation. Deacetylation by SIRT2 stimulates FOXO3-mediated transcriptional activity in response to oxidative stress. Deacetylated by SIRT3. Deacetylation by SIRT3 stimulates FOXO3-mediated mtDNA transcriptional activity in response to metabolic stress. Post-translationally, in the presence of survival factors such as IGF1, phosphorylated on Thr-32 and Ser-252 by AKT1/PKB. This phosphorylated form then interacts with 14-3-3 proteins and is retained in the cytoplasm. Survival factor withdrawal induces dephosphorylation and promotes translocation to the nucleus where the dephosphorylated protein induces transcription of target genes and triggers apoptosis. Although AKT1/PKB doesn't appear to phosphorylate Ser-314 directly, it may activate other kinases that trigger phosphorylation at this residue. Phosphorylated by STK4/MST1 on Ser-208 upon oxidative stress, which leads to dissociation from YWHAB/14-3-3-beta and nuclear translocation. Phosphorylated by PIM1. Phosphorylation by AMPK leads to the activation of transcriptional activity without affecting subcellular localization. Phosphorylated by AMPK on Ser-30 in response to metabolic stress which mediates FOXO3 mitochondrial translocation. Phosphorylation by MAPKAPK5 promotes nuclear localization and DNA-binding, leading to induction of miR-34b and miR-34c expression, 2 post-transcriptional regulators of MYC that bind to the 3'UTR of MYC transcript and prevent its translation. Phosphorylated by CHUK/IKKA and IKBKB/IKKB. TNF-induced inactivation of FOXO3 requires its phosphorylation at Ser-643 by IKBKB/IKKB which promotes FOXO3 retention in the cytoplasm, polyubiquitination and ubiquitin-mediated proteasomal degradation. May be dephosphorylated by calcineurin A on Ser-298 which abolishes FOXO3 transcriptional activity. Phosphorylation at Ser-252 promotes its degradation by the proteasome. Dephosphorylation at Ser-252 by protein phosphatase 2A (PPP2CA) promotes its stabilization; interaction with PPP2CA is enhanced by AMBRA1. In terms of processing, heavily methylated by SET9 which decreases stability, while moderately increasing transcriptional activity. The main methylation site is Lys-270. Methylation doesn't affect subcellular location. Polyubiquitinated. Ubiquitinated by a SCF complex containing SKP2, leading to proteasomal degradation. Post-translationally, the N-terminus is cleaved following import into the mitochondrion. In terms of tissue distribution, expressed in white and brown adipose tissues (at protein level). Expressed in liver, kidney, lung and colon (at protein level). Expressed in skeletal muscles (at protein level).

The protein resides in the cytoplasm. It is found in the cytosol. The protein localises to the nucleus. It localises to the mitochondrion matrix. Its subcellular location is the mitochondrion outer membrane. In terms of biological role, transcriptional activator that recognizes and binds to the DNA sequence 5'-[AG]TAAA[TC]A-3' and regulates different processes, such as apoptosis and autophagy. Acts as a positive regulator of autophagy in skeletal muscle: in starved cells, enters the nucleus following dephosphorylation and binds the promoters of autophagy genes, such as GABARAP1L, MAP1LC3B and ATG12, thereby activating their expression, resulting in proteolysis of skeletal muscle proteins. Triggers apoptosis in the absence of survival factors, including neuronal cell death upon oxidative stress. Participates in post-transcriptional regulation of MYC: following phosphorylation by MAPKAPK5, promotes induction of miR-34b and miR-34c expression, 2 post-transcriptional regulators of MYC that bind to the 3'UTR of MYC transcript and prevent its translation. In response to metabolic stress, translocates into the mitochondria where it promotes mtDNA transcription. Also acts as a key regulator of chondrogenic commitment of skeletal progenitor cells in response to lipid availability: when lipids levels are low, translocates to the nucleus and promotes expression of SOX9, which induces chondrogenic commitment and suppresses fatty acid oxidation. Also acts as a key regulator of regulatory T-cells (Treg) differentiation by activating expression of FOXP3. In Mus musculus (Mouse), this protein is Forkhead box protein O3.